A 347-amino-acid chain; its full sequence is NADH-ubiquinone oxidoreductase chain 2 (347 aa).

A run of 10 helical transmembrane segments spans residues Ile13–Leu33, Ala55–Leu75, Leu96–Pro116, Pro123–Tyr143, Asn150–Leu170, Ile178–Pro198, Thr201–Leu221, Thr247–Ile267, Ile277–Ile297, and Phe325–Met345.

Belongs to the complex I subunit 2 family. Core subunit of respiratory chain NADH dehydrogenase (Complex I) which is composed of 45 different subunits. Interacts with TMEM242.

The protein resides in the mitochondrion inner membrane. The catalysed reaction is a ubiquinone + NADH + 5 H(+)(in) = a ubiquinol + NAD(+) + 4 H(+)(out). In terms of biological role, core subunit of the mitochondrial membrane respiratory chain NADH dehydrogenase (Complex I) which catalyzes electron transfer from NADH through the respiratory chain, using ubiquinone as an electron acceptor. Essential for the catalytic activity and assembly of complex I. The polypeptide is NADH-ubiquinone oxidoreductase chain 2 (Gorilla gorilla gorilla (Western lowland gorilla)).